Reading from the N-terminus, the 168-residue chain is Ribosome maturation factor RimM (168 aa).

The PRC barrel domain maps to 94–167 (DGNYYHHQII…KVIIELLDGL (74 aa)).

This sequence belongs to the RimM family. As to quaternary structure, binds ribosomal protein uS19.

Its subcellular location is the cytoplasm. Functionally, an accessory protein needed during the final step in the assembly of 30S ribosomal subunit, possibly for assembly of the head region. Essential for efficient processing of 16S rRNA. May be needed both before and after RbfA during the maturation of 16S rRNA. It has affinity for free ribosomal 30S subunits but not for 70S ribosomes. The chain is Ribosome maturation factor RimM from Ligilactobacillus salivarius (strain UCC118) (Lactobacillus salivarius).